The primary structure comprises 559 residues: MYLPEKSVLLELISRCSSLRVFKQIQTQLITRDLLRDDLIINKVVTFLGKSADFASYSSVILHSIRSVLSSFSYNTLLSSYAVCDKPRVTIFAYKTFVSNGFSPDMFTFPPVFKACGKFSGIREGKQIHGIVTKMGFYDDIYVQNSLVHFYGVCGESRNACKVFGEMPVRDVVSWTGIITGFTRTGLYKEALDTFSKMDVEPNLATYVCVLVSSGRVGCLSLGKGIHGLILKRASLISLETGNALIDMYVKCEQLSDAMRVFGELEKKDKVSWNSMISGLVHCERSKEAIDLFSLMQTSSGIKPDGHILTSVLSACASLGAVDHGRWVHEYILTAGIKWDTHIGTAIVDMYAKCGYIETALEIFNGIRSKNVFTWNALLGGLAIHGHGLESLRYFEEMVKLGFKPNLVTFLAALNACCHTGLVDEGRRYFHKMKSREYNLFPKLEHYGCMIDLLCRAGLLDEALELVKAMPVKPDVRICGAILSACKNRGTLMELPKEILDSFLDIEFEDSGVYVLLSNIFAANRRWDDVARIRRLMKVKGISKVPGSSYIEKFMTLDQ.

PPR repeat units follow at residues 70-104 (SSFS…GFSP), 105-139 (DMFT…GFYD), 140-170 (DIYV…MPVR), 171-201 (DVVS…MDVE), 203-233 (NLAT…ILKR), 238-268 (SLET…LEKK), 269-304 (DKVS…GIKP), 305-339 (DGHI…GIKW), 340-370 (DTHI…IRSK), 371-405 (NVFT…GFKP), 406-440 (NLVT…EYNL), and 443-473 (KLEH…MPVK). The interval 478–554 (ICGAILSACK…VPGSSYIEKF (77 aa)) is type E motif.

Belongs to the PPR family. PCMP-E subfamily.

The sequence is that of Pentatricopeptide repeat-containing protein At4g38010 (PCMP-E45) from Arabidopsis thaliana (Mouse-ear cress).